An 87-amino-acid chain; its full sequence is Cell division protein FtsL (87 aa).

Residues 1–6 lie on the Cytoplasmic side of the membrane; that stretch reads MNKSNF. A helical membrane pass occupies residues 7 to 23; that stretch reads FLLLAVCVSAFSVVMQQ. Residues 24-87 lie on the Periplasmic side of the membrane; the sequence is NQYRLNFTAL…GNTFMVEHQR (64 aa). Positions 31-71 form a coiled coil; sequence TALDKAKKQEIALEQDYAQMRLQQARLANHEAIRAAAEKQN. Residues 68–87 form a disordered region; sequence EKQNLHPPVSGNTFMVEHQR.

This sequence belongs to the FtsL family. As to quaternary structure, part of a complex composed of FtsB, FtsL and FtsQ.

The protein localises to the cell inner membrane. Functionally, essential cell division protein. May link together the upstream cell division proteins, which are predominantly cytoplasmic, with the downstream cell division proteins, which are predominantly periplasmic. The chain is Cell division protein FtsL from Neisseria gonorrhoeae (strain ATCC 700825 / FA 1090).